The primary structure comprises 243 residues: Venom protease (243 aa).

One can recognise a Peptidase S1 domain in the interval 1 to 243 (VVGGKPAKLG…DSFILPALKK (243 aa)). A disulfide bridge connects residues Cys34 and Cys50. Catalysis depends on charge relay system residues His49 and Asp97. 2 disulfide bridges follow: Cys165-Cys178 and Cys189-Cys217. Ser193 serves as the catalytic Charge relay system.

This sequence belongs to the peptidase S1 family. In terms of tissue distribution, expressed by the venom duct.

It is found in the secreted. The chain is Venom protease from Bombus pensylvanicus (American bumblebee).